The primary structure comprises 351 residues: Foldase protein PrsA 1 (351 aa).

A signal peptide spans 1–22 (MKNSNKLIASVVTLASVMALAA). Residue C23 is the site of N-palmitoyl cysteine attachment. C23 carries S-diacylglycerol cysteine lipidation. The 96-residue stretch at 145–240 (TPTMAVEMIT…KKFYIVKVTK (96 aa)) folds into the PpiC domain. Composition is skewed to low complexity over residues 303–317 (KTKA…SESS) and 326–351 (ESEQ…PAAQ). A disordered region spans residues 303-351 (KTKAASESSTTSESSKAAEENPSESEQTQTSSAEEPTETEAQTQEPAAQ).

It belongs to the PrsA family.

The protein localises to the cell membrane. The catalysed reaction is [protein]-peptidylproline (omega=180) = [protein]-peptidylproline (omega=0). In terms of biological role, plays a major role in protein secretion by helping the post-translocational extracellular folding of several secreted proteins. The chain is Foldase protein PrsA 1 (prsA1) from Streptococcus pyogenes serotype M18 (strain MGAS8232).